Here is an 894-residue protein sequence, read N- to C-terminus: Alanine--tRNA ligase (894 aa).

Zn(2+) contacts are provided by His587, His591, Cys691, and His695. The segment at 739–758 (AEGDRAAEEAKGRLQEERDA) is disordered.

Belongs to the class-II aminoacyl-tRNA synthetase family. The cofactor is Zn(2+).

It is found in the cytoplasm. It carries out the reaction tRNA(Ala) + L-alanine + ATP = L-alanyl-tRNA(Ala) + AMP + diphosphate. In terms of biological role, catalyzes the attachment of alanine to tRNA(Ala) in a two-step reaction: alanine is first activated by ATP to form Ala-AMP and then transferred to the acceptor end of tRNA(Ala). Also edits incorrectly charged Ser-tRNA(Ala) and Gly-tRNA(Ala) via its editing domain. The chain is Alanine--tRNA ligase from Cenarchaeum symbiosum (strain A).